Reading from the N-terminus, the 264-residue chain is 3-methyl-2-oxobutanoate hydroxymethyltransferase (264 aa).

Residues D45 and D84 each contribute to the Mg(2+) site. Residues 45 to 46, D84, and K112 each bind 3-methyl-2-oxobutanoate; that span reads DS. E114 is a binding site for Mg(2+). The Proton acceptor role is filled by E181.

This sequence belongs to the PanB family. As to quaternary structure, homodecamer; pentamer of dimers. It depends on Mg(2+) as a cofactor.

It is found in the cytoplasm. The enzyme catalyses 3-methyl-2-oxobutanoate + (6R)-5,10-methylene-5,6,7,8-tetrahydrofolate + H2O = 2-dehydropantoate + (6S)-5,6,7,8-tetrahydrofolate. The protein operates within cofactor biosynthesis; (R)-pantothenate biosynthesis; (R)-pantoate from 3-methyl-2-oxobutanoate: step 1/2. In terms of biological role, catalyzes the reversible reaction in which hydroxymethyl group from 5,10-methylenetetrahydrofolate is transferred onto alpha-ketoisovalerate to form ketopantoate. The polypeptide is 3-methyl-2-oxobutanoate hydroxymethyltransferase (Vibrio campbellii (strain ATCC BAA-1116)).